The chain runs to 110 residues: Phosphoribosyl-ATP pyrophosphatase (110 aa).

The protein belongs to the PRA-PH family.

The protein localises to the cytoplasm. The enzyme catalyses 1-(5-phospho-beta-D-ribosyl)-ATP + H2O = 1-(5-phospho-beta-D-ribosyl)-5'-AMP + diphosphate + H(+). The protein operates within amino-acid biosynthesis; L-histidine biosynthesis; L-histidine from 5-phospho-alpha-D-ribose 1-diphosphate: step 2/9. This Pseudomonas fluorescens (strain Pf0-1) protein is Phosphoribosyl-ATP pyrophosphatase.